Here is a 481-residue protein sequence, read N- to C-terminus: Keratin, type II cuticular Hb1 (481 aa).

The head stretch occupies residues Met1–Glu106. One can recognise an IF rod domain in the interval Glu106–Leu417. The tract at residues Lys107–Tyr141 is coil 1A. The linker 1 stretch occupies residues Gln142–Met151. Residues Glu152–Ser252 form a coil 1B region. A Glycyl lysine isopeptide (Lys-Gly) (interchain with G-Cter in SUMO1) cross-link involves residue Lys212. The segment at His253–Leu269 is linker 12. Residues Asn270–Glu413 form a coil 2 region. A tail region spans residues Glu414–Cys481.

The protein belongs to the intermediate filament family. As to quaternary structure, heterotetramer of two type I and two type II keratins. Expressed in dorsal skin.

The polypeptide is Keratin, type II cuticular Hb1 (Mus musculus (Mouse)).